The chain runs to 213 residues: Redox-sensing transcriptional repressor Rex (213 aa).

A DNA-binding region (H-T-H motif) is located at residues 17-56 (LYYRIFKRFYADQVEKASSKQIADAMGIDSATVRRDFSYF). 91-96 (GCGNIG) lines the NAD(+) pocket.

This sequence belongs to the transcriptional regulatory Rex family. In terms of assembly, homodimer.

The protein localises to the cytoplasm. Modulates transcription in response to changes in cellular NADH/NAD(+) redox state. The chain is Redox-sensing transcriptional repressor Rex from Streptococcus uberis (strain ATCC BAA-854 / 0140J).